The primary structure comprises 467 residues: Glycogen synthase (467 aa).

Residue Lys-16 participates in ADP-alpha-D-glucose binding.

This sequence belongs to the glycosyltransferase 1 family. Bacterial/plant glycogen synthase subfamily.

It catalyses the reaction [(1-&gt;4)-alpha-D-glucosyl](n) + ADP-alpha-D-glucose = [(1-&gt;4)-alpha-D-glucosyl](n+1) + ADP + H(+). It functions in the pathway glycan biosynthesis; glycogen biosynthesis. Functionally, synthesizes alpha-1,4-glucan chains using ADP-glucose. The chain is Glycogen synthase from Paracoccus denitrificans (strain Pd 1222).